Here is a 461-residue protein sequence, read N- to C-terminus: Divalent metal cation transporter MntH (461 aa).

A run of 11 helical transmembrane segments spans residues Ala-56–Trp-76, Thr-89–Ala-109, Ala-132–Ile-152, Leu-160–Ile-180, Ala-193–Ala-213, Ile-230–Pro-250, Ile-285–Phe-305, Leu-322–Cys-342, Ala-378–Gln-398, Leu-399–Val-419, and Ser-433–Val-453.

This sequence belongs to the NRAMP family.

It is found in the cell inner membrane. H(+)-stimulated, divalent metal cation uptake system. The chain is Divalent metal cation transporter MntH from Agrobacterium fabrum (strain C58 / ATCC 33970) (Agrobacterium tumefaciens (strain C58)).